An 86-amino-acid polypeptide reads, in one-letter code: Large ribosomal subunit protein uL23 (86 aa).

Belongs to the universal ribosomal protein uL23 family. Part of the 50S ribosomal subunit. Contacts protein L29.

In terms of biological role, binds to 23S rRNA. One of the proteins that surrounds the polypeptide exit tunnel on the outside of the ribosome. The sequence is that of Large ribosomal subunit protein uL23 from Thermococcus sibiricus (strain DSM 12597 / MM 739).